Here is a 315-residue protein sequence, read N- to C-terminus: MEESVGSRGGSGGGGLDAQIEQLMECRPLSETEVKTLCEKAKEILMEESNVQPVKSPVTICGDIHGQFHDLVELFRIGGKCPDTNYLFMGDYVDRGYYSVETVTLLVALKVRYPQRITILRGNHESRQITQVYGFYDECLRKYGSANVWKIFTDLFDYFPLTALVESEIFCLHGGLSPSIDNLDSVRSLDRVQEVPHEGPMCDLLWSDPDDRCGWGISPRGAGYTFGQDISEQFNHSNNLKLVARAHQLVMEGYNWAHEQKVVTIFSAPNYCYRCGNMASILEVDDCRNHTFIQFEPAPRRGEPDVTRRTPDYFL.

Residues aspartate 63, histidine 65, aspartate 91, and asparagine 123 each contribute to the Mn(2+) site. Residue histidine 124 is the Proton donor of the active site. Residues histidine 173 and histidine 247 each contribute to the Mn(2+) site.

This sequence belongs to the PPP phosphatase family. PP-2A subfamily. Requires Mn(2+) as cofactor.

It localises to the cytoplasm. It catalyses the reaction O-phospho-L-seryl-[protein] + H2O = L-seryl-[protein] + phosphate. The catalysed reaction is O-phospho-L-threonyl-[protein] + H2O = L-threonyl-[protein] + phosphate. In Oryza sativa subsp. indica (Rice), this protein is Putative serine/threonine-protein phosphatase PP2A-4 catalytic subunit (PP2A4).